Consider the following 624-residue polypeptide: MLSANAKVKVQNFGRFLSNMVMPNIGAFIAWGFITALFIPTGWLPNETLAKLVGPMITYLLPLLIGYSGGKLIAGERGAVVGAIATAGVIVGTDIPMFLGAMIAGPTGGWAIKRFDKWADGKIKSGFEMLVNNFSSGIIGMILAILFFWLIGPAVKALSTMLAAGVDILVKAHLLPLTSIFVEPAKILFLNNAINHGIFSPLGIQQSQEFGQSIFFLIEANPGPGLGVLLAYIIFGKGTAKQTAGGATIIHFFGGIHEIYFPYVLMNPRLLLAVIAGGVSGVFTLVLFNAGLVAPASPGSIIAVLLMTPQNAIVGVLASVAIAATVSFVIASFFLKIQKEENGHSLEKMQAASKAMKSGVQFNTPARYQGVQKIFVACDAGMGSSAMGASMLRKKVKEAGLAIEVTNCAINDLPEDAQLVITHQDLTLRAKKHTPNAMHFSLNNFLDAHFYDNLVQDLSNTKVADLAKVSTLEPQEAPQTAFVLTEKQVFLGLKAANKEEAIRFAGERLVESGFVLPSYVDAMFEREKMVSTYLGEGIAVPHGTIEAKDAVLKTGVVVCQYPEGVKFNEDEEDSIAKLVIGIAAKNNEHLQVVSAITNALDNEDAIRILSETDDVEKVLALLKA.

In terms of domain architecture, PTS EIIC type-2 spans 13–336; the sequence is FGRFLSNMVM…SFVIASFFLK (324 aa). 6 helical membrane-spanning segments follow: residues 25 to 46, 51 to 71, 135 to 156, 166 to 186, 274 to 293, and 314 to 335; these read IGAFIAWGFITALFIPTGWLPN, KLVGPMITYLLPLLIGYSGGK, SSGIIGMILAILFFWLIGPAVK, VDILVKAHLLPLTSIFVEPAK, VIAGGVSGVFTLVLFNAGLV, and VGVLASVAIAATVSFVIASFFL. Residues 372 to 463 enclose the PTS EIIB type-2 domain; sequence QKIFVACDAG…LVQDLSNTKV (92 aa). The active-site Phosphocysteine intermediate; for EIIB activity is the C378. At C378 the chain carries Phosphocysteine; by EIIA. In terms of domain architecture, PTS EIIA type-2 spans 482 to 624; it reads FVLTEKQVFL…VEKVLALLKA (143 aa). Residue H542 is the Tele-phosphohistidine intermediate; for EIIA activity of the active site. At H542 the chain carries Phosphohistidine; by HPr.

In terms of assembly, homodimer. An intramolecular phosphotransfer takes places between His-542 and Cys-378.

The protein localises to the cell inner membrane. The catalysed reaction is D-mannitol(out) + N(pros)-phospho-L-histidyl-[protein] = D-mannitol 1-phosphate(in) + L-histidyl-[protein]. Its function is as follows. The phosphoenolpyruvate-dependent sugar phosphotransferase system (sugar PTS), a major carbohydrate active transport system, catalyzes the phosphorylation of incoming sugar substrates concomitantly with their translocation across the cell membrane. This system is involved in D-mannitol transport. This chain is PTS system mannitol-specific EIICBA component (mtlA), found in Pasteurella multocida (strain Pm70).